The following is a 372-amino-acid chain: 4-hydroxybenzoate polyprenyltransferase, mitochondrial (372 aa).

The transit peptide at 1-42 (MFIWQRKSILLGRSILGSGRVTVAGIIGSSRKRYTSSSSSSS) directs the protein to the mitochondrion. Transmembrane regions (helical) follow at residues 92-112 (PVGTWLLYLPCSWSILMGAMM), 114-134 (GATLSATAGMLGIFGVGALVM), 171-191 (ALVFLGAQTLVGMGVLSLLPA), 193-213 (CWWLGLASLPIVFTYPLFKRF), 229-249 (ALLGFPAMGVMSWPTMIPLYL), 298-318 (IALLAVAGLNSGLLWGPGFIG), and 352-372 (TGLYFTYALAVDYILRLFGFL).

It belongs to the UbiA prenyltransferase family. Mg(2+) serves as cofactor.

It localises to the mitochondrion inner membrane. It carries out the reaction an all-trans-polyprenyl diphosphate + 4-hydroxybenzoate = a 4-hydroxy-3-(all-trans-polyprenyl)benzoate + diphosphate. The protein operates within cofactor biosynthesis; ubiquinone biosynthesis. Functionally, catalyzes the prenylation of para-hydroxybenzoate (PHB) with an all-trans polyprenyl group. Mediates the second step in the final reaction sequence of coenzyme Q (CoQ) biosynthesis, which is the condensation of the polyisoprenoid side chain with PHB, generating the first membrane-bound Q intermediate. The chain is 4-hydroxybenzoate polyprenyltransferase, mitochondrial from Saccharomyces cerevisiae (strain ATCC 204508 / S288c) (Baker's yeast).